Consider the following 517-residue polypeptide: Putative ribose/galactose/methyl galactoside import ATP-binding protein 1 (517 aa).

ABC transporter domains are found at residues 23-258 and 269-515; these read LQLQ…VGRP and TPTD…SGRS. 55 to 62 is a binding site for ATP; the sequence is GENGAGKS.

Belongs to the ABC transporter superfamily. Carbohydrate importer 2 (CUT2) (TC 3.A.1.2) family.

The protein resides in the cell inner membrane. It catalyses the reaction D-ribose(out) + ATP + H2O = D-ribose(in) + ADP + phosphate + H(+). The catalysed reaction is D-galactose(out) + ATP + H2O = D-galactose(in) + ADP + phosphate + H(+). Functionally, part of an ABC transporter complex involved in carbohydrate import. Could be involved in ribose, galactose and/or methyl galactoside import. Responsible for energy coupling to the transport system. This chain is Putative ribose/galactose/methyl galactoside import ATP-binding protein 1, found in Burkholderia ambifaria (strain ATCC BAA-244 / DSM 16087 / CCUG 44356 / LMG 19182 / AMMD) (Burkholderia cepacia (strain AMMD)).